The primary structure comprises 37 residues: Non-specific lipid-transfer protein P4 (37 aa).

The protein belongs to the plant LTP family.

Its subcellular location is the secreted. In terms of biological role, plant non-specific lipid-transfer proteins transfer phospholipids as well as galactolipids across membranes. May play a role in wax or cutin deposition in the cell walls of expanding epidermal cells and certain secretory tissues. This Vitis sp. (Grape) protein is Non-specific lipid-transfer protein P4.